Consider the following 371-residue polypeptide: MSKRDYYEVLGLSKGASKDEIKKAYRRLAKKYHPDVSKEENAIEKFKEVQEAYEVLSDDQKRAQYDQFGHAGANQGFGGFGGGGDFGGGFGFEDIFSSFFGGGGGRRRDPNAPRQGADLQYQVTLEFEEAIFGKELNVEIPVEDPCDTCKGSGAKPGTSKETCKHCSGSGQVSVEQNTPFGRIVNRQACSHCSGTGQMIKEKCTTCHGSGKVRKRKKINVKIPAGIDNGQQIRVSGKGEAGVNGGPXGDLYVVVHVRSHEFFEREGDHIICEMPLTFAQMALGAEVEVPTVHGKVKLKIPAGTQTGTEFRLKGKGAPNVRGYGQGDQYVVVRVVVPTKLTSHQKDLLREFAGQEEQDDSLFGKLKRAFKGE.

The region spanning 5-69 (DYYEVLGLSK…QKRAQYDQFG (65 aa)) is the J domain. The segment at 133–215 (GKELNVEIPV…CHGSGKVRKR (83 aa)) adopts a CR-type zinc-finger fold. Zn(2+) contacts are provided by Cys146, Cys149, Cys163, Cys166, Cys189, Cys192, Cys203, and Cys206. CXXCXGXG motif repeat units follow at residues 146 to 153 (CDTCKGSG), 163 to 170 (CKHCSGSG), 189 to 196 (CSHCSGTG), and 203 to 210 (CTTCHGSG).

Belongs to the DnaJ family. As to quaternary structure, homodimer. The cofactor is Zn(2+).

The protein resides in the cytoplasm. In terms of biological role, participates actively in the response to hyperosmotic and heat shock by preventing the aggregation of stress-denatured proteins and by disaggregating proteins, also in an autonomous, DnaK-independent fashion. Unfolded proteins bind initially to DnaJ; upon interaction with the DnaJ-bound protein, DnaK hydrolyzes its bound ATP, resulting in the formation of a stable complex. GrpE releases ADP from DnaK; ATP binding to DnaK triggers the release of the substrate protein, thus completing the reaction cycle. Several rounds of ATP-dependent interactions between DnaJ, DnaK and GrpE are required for fully efficient folding. Also involved, together with DnaK and GrpE, in the DNA replication of plasmids through activation of initiation proteins. In Bacillus cereus (strain AH820), this protein is Chaperone protein DnaJ.